The chain runs to 405 residues: Deoxyguanosinetriphosphate triphosphohydrolase-like protein (405 aa).

The region spanning 75–219 (RLTHTIEVAQ…AAIADDIAYN (145 aa)) is the HD domain.

It belongs to the dGTPase family. Type 2 subfamily.

The protein is Deoxyguanosinetriphosphate triphosphohydrolase-like protein of Agrobacterium fabrum (strain C58 / ATCC 33970) (Agrobacterium tumefaciens (strain C58)).